A 125-amino-acid chain; its full sequence is MPTINQLVRKPRQLAVIKSKVPALDACPQKRGVCTRVYTTTPKKPNSALRKVAKVRLTNGFEVISYIGGEGHNLQEHSVVLIRGGRVKDLPGVRYHIVRGSLDLQGVKDRKQSRSKYGAKRPKKA.

Asp89 carries the post-translational modification 3-methylthioaspartic acid. Residues 106–125 (GVKDRKQSRSKYGAKRPKKA) form a disordered region. Positions 113–125 (SRSKYGAKRPKKA) are enriched in basic residues.

Belongs to the universal ribosomal protein uS12 family. Part of the 30S ribosomal subunit. Contacts proteins S8 and S17. May interact with IF1 in the 30S initiation complex.

With S4 and S5 plays an important role in translational accuracy. In terms of biological role, interacts with and stabilizes bases of the 16S rRNA that are involved in tRNA selection in the A site and with the mRNA backbone. Located at the interface of the 30S and 50S subunits, it traverses the body of the 30S subunit contacting proteins on the other side and probably holding the rRNA structure together. The combined cluster of proteins S8, S12 and S17 appears to hold together the shoulder and platform of the 30S subunit. This chain is Small ribosomal subunit protein uS12, found in Aromatoleum aromaticum (strain DSM 19018 / LMG 30748 / EbN1) (Azoarcus sp. (strain EbN1)).